A 322-amino-acid polypeptide reads, in one-letter code: Ribosomal RNA small subunit methyltransferase H (322 aa).

S-adenosyl-L-methionine contacts are provided by residues 34-36 (GGH), D59, F86, D112, and Q119.

The protein belongs to the methyltransferase superfamily. RsmH family.

It is found in the cytoplasm. It carries out the reaction cytidine(1402) in 16S rRNA + S-adenosyl-L-methionine = N(4)-methylcytidine(1402) in 16S rRNA + S-adenosyl-L-homocysteine + H(+). In terms of biological role, specifically methylates the N4 position of cytidine in position 1402 (C1402) of 16S rRNA. This Chlorobium limicola (strain DSM 245 / NBRC 103803 / 6330) protein is Ribosomal RNA small subunit methyltransferase H.